The sequence spans 708 residues: Ribosomal RNA large subunit methyltransferase K/L (708 aa).

The THUMP domain maps to 43–154 (QIYRCCLWSR…KENALLGIDM (112 aa)).

Belongs to the methyltransferase superfamily. RlmKL family.

Its subcellular location is the cytoplasm. The enzyme catalyses guanosine(2445) in 23S rRNA + S-adenosyl-L-methionine = N(2)-methylguanosine(2445) in 23S rRNA + S-adenosyl-L-homocysteine + H(+). It carries out the reaction guanosine(2069) in 23S rRNA + S-adenosyl-L-methionine = N(2)-methylguanosine(2069) in 23S rRNA + S-adenosyl-L-homocysteine + H(+). Functionally, specifically methylates the guanine in position 2445 (m2G2445) and the guanine in position 2069 (m7G2069) of 23S rRNA. This Vibrio cholerae serotype O1 (strain ATCC 39541 / Classical Ogawa 395 / O395) protein is Ribosomal RNA large subunit methyltransferase K/L.